Here is a 237-residue protein sequence, read N- to C-terminus: Ribonuclease PH (237 aa).

Phosphate is bound by residues Arg-86 and 124-126 (GTR).

This sequence belongs to the RNase PH family. Homohexameric ring arranged as a trimer of dimers.

The enzyme catalyses tRNA(n+1) + phosphate = tRNA(n) + a ribonucleoside 5'-diphosphate. Functionally, phosphorolytic 3'-5' exoribonuclease that plays an important role in tRNA 3'-end maturation. Removes nucleotide residues following the 3'-CCA terminus of tRNAs; can also add nucleotides to the ends of RNA molecules by using nucleoside diphosphates as substrates, but this may not be physiologically important. Probably plays a role in initiation of 16S rRNA degradation (leading to ribosome degradation) during starvation. The polypeptide is Ribonuclease PH (Shewanella sp. (strain ANA-3)).